The sequence spans 1243 residues: Plasma membrane calcium-transporting ATPase 2 (1243 aa).

Polar residues predominate over residues 1–13 (MGDMTNSDFYSKN). The interval 1-24 (MGDMTNSDFYSKNQRNESSHGGEF) is disordered. The Cytoplasmic portion of the chain corresponds to 1–94 (MGDMTNSDFY…NFIPPKKPKT (94 aa)). Ser-18 bears the Phosphoserine mark. The helical transmembrane segment at 95–115 (FLQLVWEALQDVTLIILEIAA) threads the bilayer. At 116-152 (IISLGLSFYHPPGEGNEGCATAQGGAEDEGEAEAGWI) the chain is on the extracellular side. The helical transmembrane segment at 153-173 (EGAAILLSVICVVLVTAFNDW) threads the bilayer. At 174-390 (SKEKQFRGLQ…KEKSVLQGKL (217 aa)) the chain is on the cytoplasmic side. Residues 334–381 (GKMQDGNVDASQSKAKQQDGAAAMEMQPLKSAEGGDADDRKKASMHKK) form a disordered region. Residues 391–410 (TKLAVQIGKAGLVMSAITVI) traverse the membrane as a helical segment. Topologically, residues 411–443 (ILVLYFTVDTFVVNKKPWLPECTPVYVQYFVKF) are extracellular. Residues 444–461 (FIIGVTVLVVAVPEGLPL) traverse the membrane as a helical segment. At 462-875 (AVTISLAYSV…MWGRNVYDSI (414 aa)) the chain is on the cytoplasmic side. Asp-499 (4-aspartylphosphate intermediate) is an active-site residue. Mg(2+)-binding residues include Asp-820 and Asp-824. Residues 876–895 (SKFLQFQLTVNVVAVIVAFT) traverse the membrane as a helical segment. Residues 896-905 (GACITQDSPL) lie on the Extracellular side of the membrane. A helical membrane pass occupies residues 906-926 (KAVQMLWVNLIMDTFASLALA). The Cytoplasmic segment spans residues 927–946 (TEPPTETLLLRKPYGRNKPL). The chain crosses the membrane as a helical span at residues 947–969 (ISRTMMKNILGHAVYQLALIFTL). Residues 970–987 (LFVGEKMFQIDSGRNAPL) lie on the Extracellular side of the membrane. The helical transmembrane segment at 988 to 1009 (HSPPSEHYTIIFNTFVMMQLFN) threads the bilayer. The Cytoplasmic portion of the chain corresponds to 1010–1028 (EINARKIHGERNVFDGIFR). A helical membrane pass occupies residues 1029-1050 (NPIFCTIVLGTFAIQIVIVQFG). Residues 1051 to 1060 (GKPFSCSPLQ) lie on the Extracellular side of the membrane. Residues 1061-1082 (LDQWMWCIFIGLGELVWGQVIA) traverse the membrane as a helical segment. At 1083-1243 (TIPTSRLKFL…SPIHSLETSL (161 aa)) the chain is on the cytoplasmic side. Phosphoserine occurs at positions 1120, 1132, and 1134. The interval 1123-1140 (LRRGQILWFRGLNRIQTQ) is calmodulin-binding subdomain A. Thr-1139 is subject to Phosphothreonine; by PKC. The interval 1141 to 1150 (IRVVKAFRSS) is calmodulin-binding subdomain B. 6 positions are modified to phosphoserine: Ala-1146, Leu-1151, Ser-1163, His-1165, Asp-1177, and Ser-1178. Thr-1188 carries the post-translational modification Phosphothreonine. Residues 1194–1243 (AALKQNSSPPSSLNKNNSAIDSGINLTTDTSKSATSSSPGSPIHSLETSL) are disordered. Composition is skewed to low complexity over residues 1196–1211 (LKQN…KNNS) and 1220–1234 (TTDT…SPGS). Ser-1201 is modified (phosphoserine; by PKA). Ser-1211 is modified (phosphoserine).

The protein belongs to the cation transport ATPase (P-type) (TC 3.A.3) family. Type IIB subfamily. Interacts with PDZD11. As to expression, mainly expressed in brain cortex. Found in low levels in skeletal muscle, heart muscle, stomach, liver, kidney and lung. Isoforms containing segment B are found in brain cortex and at low levels in other tissues. Isoforms containing segments X and W are found at low levels in all tissues. Isoforms containing segment A and segment Z are found at low levels in skeletal muscle and heart muscle.

Its subcellular location is the cell membrane. It is found in the synapse. The protein localises to the apical cell membrane. It localises to the basolateral cell membrane. It catalyses the reaction Ca(2+)(in) + ATP + H2O = Ca(2+)(out) + ADP + phosphate + H(+). Up-regulated by calmodulin which increases the affinity of the pump for Ca(2+) ions. In terms of biological role, ATP-driven Ca(2+) ion pump involved in the maintenance of basal intracellular Ca(2+) levels in specialized cells of cerebellar circuit and vestibular and cochlear systems. Uses ATP as an energy source to transport cytosolic Ca(2+) ions across the plasma membrane to the extracellular compartment. Has fast activation and Ca(2+) clearance rate suited to control fast neuronal Ca(2+) dynamics. At parallel fiber to Purkinje neuron synapse, mediates presynaptic Ca(2+) efflux in response to climbing fiber-induced Ca(2+) rise. Provides for fast return of Ca(2+) concentrations back to their resting levels, ultimately contributing to long-term depression induction and motor learning. Plays an essential role in hearing and balance. In cochlear hair cells, shuttles Ca(2+) ions from stereocilia to the endolymph and dissipates Ca(2+) transients generated by the opening of the mechanoelectrical transduction channels. Regulates Ca(2+) levels in the vestibular system, where it contributes to the formation of otoconia. In non-excitable cells, regulates Ca(2+) signaling through spatial control of Ca(2+) ions extrusion and dissipation of Ca(2+) transients generated by store-operated channels. In lactating mammary gland, allows for the high content of Ca(2+) ions in the milk. This Homo sapiens (Human) protein is Plasma membrane calcium-transporting ATPase 2.